A 156-amino-acid polypeptide reads, in one-letter code: ATP synthase subunit b (156 aa).

Residues 7-27 (IFFQMLVFFVLGWFTMKFVWP) traverse the membrane as a helical segment.

This sequence belongs to the ATPase B chain family. In terms of assembly, F-type ATPases have 2 components, F(1) - the catalytic core - and F(0) - the membrane proton channel. F(1) has five subunits: alpha(3), beta(3), gamma(1), delta(1), epsilon(1). F(0) has three main subunits: a(1), b(2) and c(10-14). The alpha and beta chains form an alternating ring which encloses part of the gamma chain. F(1) is attached to F(0) by a central stalk formed by the gamma and epsilon chains, while a peripheral stalk is formed by the delta and b chains.

The protein localises to the cell inner membrane. Its function is as follows. F(1)F(0) ATP synthase produces ATP from ADP in the presence of a proton or sodium gradient. F-type ATPases consist of two structural domains, F(1) containing the extramembraneous catalytic core and F(0) containing the membrane proton channel, linked together by a central stalk and a peripheral stalk. During catalysis, ATP synthesis in the catalytic domain of F(1) is coupled via a rotary mechanism of the central stalk subunits to proton translocation. In terms of biological role, component of the F(0) channel, it forms part of the peripheral stalk, linking F(1) to F(0). The protein is ATP synthase subunit b of Bordetella bronchiseptica (strain ATCC BAA-588 / NCTC 13252 / RB50) (Alcaligenes bronchisepticus).